Here is a 474-residue protein sequence, read N- to C-terminus: tRNA-2-methylthio-N(6)-dimethylallyladenosine synthase (474 aa).

Positions 3-120 (KKLHIKTWGC…LPEMINHVQG (118 aa)) constitute an MTTase N-terminal domain. [4Fe-4S] cluster is bound by residues Cys12, Cys49, Cys83, Cys157, Cys161, and Cys164. Residues 143–375 (RAEGPTAFVS…QQRISQQAME (233 aa)) enclose the Radical SAM core domain. The region spanning 378–441 (RKMVGTVQRV…ASSLRGILLR (64 aa)) is the TRAM domain.

It belongs to the methylthiotransferase family. MiaB subfamily. In terms of assembly, monomer. Requires [4Fe-4S] cluster as cofactor.

The protein localises to the cytoplasm. It catalyses the reaction N(6)-dimethylallyladenosine(37) in tRNA + (sulfur carrier)-SH + AH2 + 2 S-adenosyl-L-methionine = 2-methylsulfanyl-N(6)-dimethylallyladenosine(37) in tRNA + (sulfur carrier)-H + 5'-deoxyadenosine + L-methionine + A + S-adenosyl-L-homocysteine + 2 H(+). Its function is as follows. Catalyzes the methylthiolation of N6-(dimethylallyl)adenosine (i(6)A), leading to the formation of 2-methylthio-N6-(dimethylallyl)adenosine (ms(2)i(6)A) at position 37 in tRNAs that read codons beginning with uridine. The sequence is that of tRNA-2-methylthio-N(6)-dimethylallyladenosine synthase from Yersinia pestis bv. Antiqua (strain Angola).